A 125-amino-acid chain; its full sequence is MPTIQQLIHSAREKITNKTKSPALKACPQRRGVCTRVYTTTPKKPNSALRKVARIRLTTGFEVTAYIPGVGHTLQEHSVVLVRGGRVKDLPGVRYHIVRGTLDTAGVKGRLKSRSKYGVKKPKKK.

It belongs to the universal ribosomal protein uS12 family. In terms of assembly, part of the 30S ribosomal subunit.

It localises to the plastid. It is found in the chloroplast. With S4 and S5 plays an important role in translational accuracy. Located at the interface of the 30S and 50S subunits. This chain is Small ribosomal subunit protein uS12c (rps12), found in Tupiella akineta (Green alga).